The following is a 542-amino-acid chain: Chitinase 1 (542 aa).

In terms of domain architecture, GH18 spans 68–506 (FNVLCYFTDW…NAAHEGLKRR (439 aa)). Residues 186-187 (QE) and 213-216 (GGWS) each bind chitin. The active-site Proton donor is glutamate 256. Chitin is bound by residues tyrosine 257, 323 to 326 (MTYD), and tryptophan 486.

The protein belongs to the glycosyl hydrolase 18 family. Semipurified toxin complex consists of at least YenA1-YenA2-YenB-YenC1-YenC2-Chi1-Chi2. The Yen-TC:K9 subcomplex is about 26 nm tall and 22 nm in diameter with 5-fold symmetry and 5 copies of YenA1, YenA2, Chi1 and Chi2; the chitinase subunits may be solvent accessible on the exterior the complex. The Yen-TC:K9 subcomplex has no insecticidal activity. The native complex with additional YenB, YenC1 and YenC2 subunits is 16 nm taller and is insecticidal; the toxicity-conferring subunits are present at about 1 copy each.

The protein localises to the secreted. It carries out the reaction Random endo-hydrolysis of N-acetyl-beta-D-glucosaminide (1-&gt;4)-beta-linkages in chitin and chitodextrins.. With respect to regulation, toxin complex is secreted when grown at 25 degrees Celsius or less; at higher temperatures the proteins are present intracellularly but not secreted. In terms of biological role, part of an orally active toxin complex (TC) with strong insecticidal effects on larvae of the Coleoptera Costelytra zealandica, Acrossidius tasmania and Adoryphorus couloni and some Lepidoptera larvae. The TC has an endochitinase activity. This subunit might aid infection by degradation of the larval peritrophic membrane. The sequence is that of Chitinase 1 from Yersinia entomophaga.